The following is a 393-amino-acid chain: GDP-4-keto-6-deoxy-D-mannose 3-dehydratase (393 aa).

A GDP-4-dehydro-alpha-D-rhamnose-binding site is contributed by 30-33; it reads NMFT. A helical transmembrane segment spans residues 53 to 73; that stretch reads YSVMVSSGSTANLLMIAALFF. Pyridoxal 5'-phosphate-binding positions include 60-61, tryptophan 92, glutamate 166, and serine 187; that span reads GS. The Proton donor/acceptor role is filled by histidine 192. Histidine 219 lines the L-glutamate pocket. A GDP-4-dehydro-alpha-D-rhamnose-binding site is contributed by arginine 223. Asparagine 252 is a pyridoxal 5'-phosphate binding site. Residue arginine 254 participates in L-glutamate binding. Glutamate 333 is a binding site for GDP-4-dehydro-alpha-D-rhamnose.

The protein belongs to the DegT/DnrJ/EryC1 family. As to quaternary structure, homodimer. Pyridoxal 5'-phosphate serves as cofactor.

It is found in the cell membrane. The enzyme catalyses GDP-4-dehydro-alpha-D-rhamnose + L-glutamate = GDP-4-dehydro-3,6-dideoxy-alpha-D-mannose + 2-oxoglutarate + NH4(+). The protein operates within nucleotide-sugar metabolism; GDP-L-colitose biosynthesis. Involved in the biosynthesis of L-colitose, a 3,6-dideoxyhexose present in the O-antigen region of lipopolysaccharides (LPS), where it serves as an antigenic determinant and is vital for bacterial defense and survival. Catalyzes the removal of the C3'-hydroxyl group from GDP-4-keto-6-deoxy-D-mannose via a combined transamination-deoxygenation reaction. The catalysis is initiated by a transamination step in which pyridoxal 5'-phosphate (PLP) is converted to pyridoxamine 5'-phosphate (PMP) in the presence of L-glutamate. This coenzyme then forms a Schiff base with GDP-4-keto-6-deoxy-D-mannose and the resulting adduct undergoes a PMP-mediated beta-dehydration reaction to give a sugar enamine intermediate, which after tautomerization and hydrolysis to release ammonia yields GDP-4-keto-3,6-dideoxy-D-mannose as a product. In Yersinia pseudotuberculosis, this protein is GDP-4-keto-6-deoxy-D-mannose 3-dehydratase.